The following is a 48-amino-acid chain: Sperm protamine P1 (48 aa).

It belongs to the protamine P1 family. As to expression, testis.

The protein resides in the nucleus. Its subcellular location is the chromosome. Its function is as follows. Protamines substitute for histones in the chromatin of sperm during the haploid phase of spermatogenesis. They compact sperm DNA into a highly condensed, stable and inactive complex. The protein is Sperm protamine P1 (PRM1) of Eptesicus fuscus (Big brown bat).